A 135-amino-acid chain; its full sequence is Biglycan (135 aa).

LRR repeat units follow at residues 4–24, 25–46, 49–72, 73–95, and 96–117; these read KLNY…DLPE, TLNE…DLLR, KLYR…SFLP, TLRE…PDLK, and LLQV…DFCP. Asparagine 65 is a glycosylation site (N-linked (GlcNAc...) asparagine). The N-linked (GlcNAc...) asparagine glycan is linked to asparagine 106.

It belongs to the small leucine-rich proteoglycan (SLRP) family. SLRP class I subfamily. In terms of assembly, homodimer. Forms a ternary complex with MFAP2 and ELN. The two attached glycosaminoglycan chains can be either chondroitin sulfate or dermatan sulfate. As to expression, found in several connective tissues, especially in articular cartilages.

Its subcellular location is the secreted. It localises to the extracellular space. It is found in the extracellular matrix. May be involved in collagen fiber assembly. The chain is Biglycan (BGN) from Oryctolagus cuniculus (Rabbit).